The chain runs to 217 residues: UPF0502 protein KPN78578_10500 (217 aa).

This sequence belongs to the UPF0502 family.

The chain is UPF0502 protein KPN78578_10500 from Klebsiella pneumoniae subsp. pneumoniae (strain ATCC 700721 / MGH 78578).